Reading from the N-terminus, the 167-residue chain is L-alanine exporter AlaE (167 aa).

4 helical membrane passes run 25–45 (GTEFLADTVALILFFTTTGII), 50–70 (IAGMSWDQVLHARLIGAALMI), 105–125 (FQVPIYAAIIAFSGATGGGLV), and 129–149 (LGAALMMLFLGRPYGAFLNWV).

The protein belongs to the AlaE exporter family.

The protein resides in the cell inner membrane. In terms of biological role, exports L-alanine. The chain is L-alanine exporter AlaE from Pantoea sp. (strain At-9b).